The primary structure comprises 380 residues: TPR repeat-containing thioredoxin TDX (380 aa).

An N-acetylvaline modification is found at V2. The span at 49-59 (TERDYEDKAET) shows a compositional bias: basic and acidic residues. The segment at 49 to 115 (TERDYEDKAE…DENRDDAQSE (67 aa)) is disordered. Over residues 69–91 (DDDDDIMESDVELDNSDVVEPDN) the composition is skewed to acidic residues. A compositionally biased stretch (basic and acidic residues) spans 106–115 (DENRDDAQSE). 3 TPR repeats span residues 112 to 145 (AQSE…NPTS), 147 to 179 (ILYA…NSDS), and 181 to 213 (KGYK…DYDE). The span at 240–263 (RKEKELQRAERERRKQQEAQEREA) shows a compositional bias: basic and acidic residues. The interval 240–265 (RKEKELQRAERERRKQQEAQEREAQA) is disordered. The 127-residue stretch at 252–378 (RRKQQEAQER…LEQKIAQHSS (127 aa)) folds into the Thioredoxin domain. Active-site nucleophile residues include C304 and C307. C304 and C307 are disulfide-bonded.

This sequence belongs to the thioredoxin family. In terms of assembly, oligomerization under high temperature.

Its function is as follows. Thiol-disulfide oxidoreductase that possesses insulin disulfide bonds reducing activity, disulfide reductase, foldase chaperone and holdase chaperone activities. Heat shock causes oligomerization and formation of high molecular weiht (HMW) complexes with concomitant functional switching from a disulfide reductase and foldase chaperone to a holdase chaperone. May interact with HSP70 proteins through the TPR repeats. The sequence is that of TPR repeat-containing thioredoxin TDX (TDX) from Arabidopsis thaliana (Mouse-ear cress).